The primary structure comprises 446 residues: Scytalone dehydratase-like protein Arp1 (446 aa).

Tyr-323 is a binding site for substrate. Active-site residues include His-358 and His-383. Asn-404 serves as a coordination point for substrate.

This sequence belongs to the scytalone dehydratase family. Homotrimer. Each subunit contains an active site, located in the central part of the hydrophobic core of the monomer, which functions independently.

In terms of biological role, scytalone dehydratase-like protein; part of the Pks2 gene cluster that mediates the formation of infectious structures (appressoria), enabling these fungi to kill insects faster. The product of the Pks2 gene cluster is different from the one of Pks1 and has still not been identified. The protein is Scytalone dehydratase-like protein Arp1 of Metarhizium acridum (strain CQMa 102).